The following is a 162-amino-acid chain: RNA pyrophosphohydrolase (162 aa).

The region spanning 7 to 149 is the Nudix hydrolase domain; that stretch reads KYRPCVGIML…KKEVYKTVIE (143 aa). Residues 40-61 carry the Nudix box motif; that stretch reads GGVDDGEELEQAALRELLEEVG.

It belongs to the Nudix hydrolase family. RppH subfamily. It depends on a divalent metal cation as a cofactor.

Functionally, accelerates the degradation of transcripts by removing pyrophosphate from the 5'-end of triphosphorylated RNA, leading to a more labile monophosphorylated state that can stimulate subsequent ribonuclease cleavage. The chain is RNA pyrophosphohydrolase from Wolbachia pipientis wMel.